The sequence spans 312 residues: Fibrinogen-like protein 1 (312 aa).

Positions 1-22 (MAKVFSFILVTTALTMGREISA) are cleaved as a signal peptide. Residues 23-61 (LEDCAQEQMRLRAQVRLLETRVKQQQVKIKQLLQENEVQ) adopt a coiled-coil conformation. Residues 74–306 (LGSKRQYADC…SVVMKIRPND (233 aa)) form the Fibrinogen C-terminal domain. 2 disulfides stabilise this stretch: cysteine 83–cysteine 112 and cysteine 248–cysteine 261.

In terms of assembly, homodimer. Interacts (via the Fibrinogen C-terminal domain) with LAG3 (via Ig-like domains 1 and 2). As to expression, under normal conditions, liver-specific.

It is found in the secreted. Immune suppressive molecule that inhibits antigen-specific T-cell activation by acting as a major ligand of LAG3. Responsible for LAG3 T-cell inhibitory function. Binds LAG3 independently from MHC class II (MHC-II). Secreted by, and promotes growth of, hepatocytes. The sequence is that of Fibrinogen-like protein 1 from Homo sapiens (Human).